Reading from the N-terminus, the 255-residue chain is NAD kinase (255 aa).

The Proton acceptor role is filled by aspartate 44. NAD(+) contacts are provided by residues 44–45 (DG), histidine 49, 114–115 (NE), aspartate 144, alanine 152, 155–160 (SAYNLS), and glutamine 216.

The protein belongs to the NAD kinase family. The cofactor is a divalent metal cation.

The protein localises to the cytoplasm. It catalyses the reaction NAD(+) + ATP = ADP + NADP(+) + H(+). Involved in the regulation of the intracellular balance of NAD and NADP, and is a key enzyme in the biosynthesis of NADP. Catalyzes specifically the phosphorylation on 2'-hydroxyl of the adenosine moiety of NAD to yield NADP. This is NAD kinase from Rickettsia typhi (strain ATCC VR-144 / Wilmington).